The chain runs to 205 residues: Putative 3-methyladenine DNA glycosylase (205 aa).

Belongs to the DNA glycosylase MPG family.

The sequence is that of Putative 3-methyladenine DNA glycosylase from Bacillus cereus (strain B4264).